The sequence spans 93 residues: uncharacterized protein (93 aa).

This is an uncharacterized protein from Rickettsia conorii (strain ATCC VR-613 / Malish 7).